The sequence spans 184 residues: Inorganic pyrophosphatase (184 aa).

Substrate contacts are provided by Lys-19, Arg-33, and Tyr-45. Residues Asp-55, Asp-60, and Asp-92 each coordinate Mg(2+). A substrate-binding site is contributed by Tyr-129.

This sequence belongs to the PPase family. Homohexamer. It depends on Mg(2+) as a cofactor.

The protein localises to the cytoplasm. The catalysed reaction is diphosphate + H2O = 2 phosphate + H(+). In terms of biological role, catalyzes the hydrolysis of inorganic pyrophosphate (PPi) forming two phosphate ions. This is Inorganic pyrophosphatase from Mycoplasma pneumoniae (strain ATCC 29342 / M129 / Subtype 1) (Mycoplasmoides pneumoniae).